We begin with the raw amino-acid sequence, 88 residues long: UPF0297 protein SPCG_0205 (88 aa).

This sequence belongs to the UPF0297 family.

The chain is UPF0297 protein SPCG_0205 from Streptococcus pneumoniae (strain CGSP14).